Reading from the N-terminus, the 220-residue chain is Fructose-6-phosphate aldolase (220 aa).

Lysine 85 functions as the Schiff-base intermediate with substrate in the catalytic mechanism.

Belongs to the transaldolase family. Type 3A subfamily. In terms of assembly, homodecamer.

It localises to the cytoplasm. It catalyses the reaction beta-D-fructose 6-phosphate = dihydroxyacetone + D-glyceraldehyde 3-phosphate. Its function is as follows. Catalyzes the reversible formation of fructose 6-phosphate from dihydroxyacetone and D-glyceraldehyde 3-phosphate via an aldolization reaction. The chain is Fructose-6-phosphate aldolase from Salmonella schwarzengrund (strain CVM19633).